Here is an 864-residue protein sequence, read N- to C-terminus: MGNRGMEDLIPLVNRLQDAFSAIGQNADLDLPQIAVVGGQSAGKSSVLENFVGRDFLPRGSGIVTRRPLVLQLVNATTEYAEFLHCKGKKFTDFEEVRLEIEAETDRVTGTNKGISPVPINLRVYSPHVLNLTLVDLPGMTKVPVGDQPPDIEFQIRDMLMQFVTKENCLILAVSPANSDLANSDALKVAKEVDPQGQRTIGVITKLDLMDEGTDARDVLENKLLPLRRGYIGVVNRSQKDIDGKKDITAALAAERKFFLSHPSYRHLADRMGTPYLQKVLNQQLTNHIRDTLPGLRNKLQSQLLSIEKEVEEYKNFRPDDPARKTKALLQMVQQFAVDFEKRIEGSGDQIDTYELSGGARINRIFHERFPFELVKMEFDEKELRREISYAIKNIHGIRTGLFTPDMAFETIVKKQVKKIREPCLKCVDMVISELISTVRQCTKKLQQYPRLREEMERIVTTHIREREGRTKEQVMLLIDIELAYMNTNHEDFIGFANAQQRSNQMNKKKTSGNQDEILVIRKGWLTINNIGIMKGGSKEYWFVLTAENLSWYKDDEEKEKKYMLSVDNLKLRDVEKGFMSSKHIFALFNTEQRNVYKDYRQLELACETQEEVDSWKASFLRAGVYPERVGDKEKASETEENGSDSFMHSMDPQLERQVETIRNLVDSYMAIVNKTVRDLMPKTIMHLMINNTKEFIFSELLANLYSCGDQNTLMEESAEQAQRRDEMLRMYHALKEALSIIGDINTTTVSTPMPPPVDDSWLQVQSVPAGRRSPTSSPTPQRRAPAVPPARPGSRGPAPGPPPAGSALGGAPPVPSRPGASPDPFGPPPQVPSRPNRAPPGVPSRSGQASPSRPESPRPPFDL.

In terms of domain architecture, Dynamin-type G spans 28 to 294 (DLDLPQIAVV…LTNHIRDTLP (267 aa)). Residues 38-45 (GGQSAGKS) are G1 motif. Positions 41, 43, 44, 45, 46, 59, and 60 each coordinate GDP. The interval 64 to 66 (VTR) is G2 motif. Tyr-80 is subject to Phosphotyrosine. Residue Tyr-125 is modified to 3'-nitrotyrosine; alternate. Tyr-125 is subject to Phosphotyrosine; alternate. Residues 136 to 139 (DLPG) form a G3 motif region. Positions 205-208 (TKLD) are G4 motif. 6 residues coordinate GDP: Lys-206, Asp-208, Asp-211, Asn-236, Arg-237, and Gln-239. The segment at 235–238 (VNRS) is G5 motif. Ser-306 and Ser-347 each carry phosphoserine. A Phosphotyrosine modification is found at Tyr-354. Ser-512 bears the Phosphoserine mark. The PH domain occupies 519 to 625 (LVIRKGWLTI…WKASFLRAGV (107 aa)). A GED domain is found at 659–750 (VETIRNLVDS…IIGDINTTTV (92 aa)). Residues 767 to 864 (SVPAGRRSPT…PESPRPPFDL (98 aa)) form a disordered region. Residue Ser-774 is modified to Phosphoserine; by GSK3-beta. Phosphoserine is present on Ser-778. Arg-796 is modified (omega-N-methylarginine). Residue Ser-822 is modified to Phosphoserine. The segment covering 825-843 (PFGPPPQVPSRPNRAPPGV) has biased composition (pro residues). Phosphoserine occurs at positions 851 and 857.

It belongs to the TRAFAC class dynamin-like GTPase superfamily. Dynamin/Fzo/YdjA family. Homodimer; homodimerization is mediated by the dynamin-type G domain which promotes assembly-stimulated GTPase activity. Homo-tetramer formed from two dimers in the absence of lipid. Oligomerizes into a helical polymer that self-assembles around the vesicle membrane, when associated to the menbrane through lipid binding. Interacts (via C-terminal proline-rich domain (PRD)) with SNX9 (via SH3 domain); this interaction allows regulation of DNM1 self-assembly during late stages of endocytic vesicle formation and supports DNM1's early functions in accelerating clathrin-coated pits (CCPs) maturation in non neuronals cell. Interacts (via C-terminal proline-rich domain (PRD)) with MYO1E (via SH3 domain); this interaction regulates receptor-mediated endocytosis. Interacts with SNX33 (via SH3 domain); this interaction decreases DNM1-dependent endocytosis. Interacts with DIAPH1. Interacts with GRB2 (via SH3 domain); this interaction mediates disassembly of DNM1 polymers, therefore modulates self-assembly. Forms a complex with BIN1 (via SH3 domain) and SH3GL2 (via SH3 domain). Forms a complex with SH3GL2 (via SH3 domain) and AMPH (via SH3 domain). Forms a complex with SH3GL2 (via SH3 domain) and SYNJ1. Interacts with AMPH. Interacts (via C-terminal proline-rich domain (PRD)) with SYT1; this interaction facilitates vesicle fission during clathrin-mediated endocytosis (CME). Interacts (via C-terminal proline-rich domain (PRD)) with PLCG1 (via SH3 domain); this interaction stimulates the release of GDP from DNM1 and enhances DNM1-dependent endocytosis. Interacts with SNPH; this interaction inhibits the binding of DNM1 to AMPH and DNM1-receptor-mediated endocytosis. Interacts with CAV1. Interacts with SH3GLB1 (via SH3 domain). Interacts with PACSIN1 (via SH3 domain), PACSIN2 (via SH3 domain) and PACSIN3 (via SH3 domain). Interacts with UNC119; this interaction decreases DNM1's GTPase activity and affects DNM1's interaction with AMPH. Interacts (GTP-bound form) with DNAJC6; this interaction allows clathrin-coated vesicle (CCV) formation at the plasma membrane. Phosphorylation at Ser-774 by GSK3B/GSK3-beta leads to inactivation of receptor-mediated endocytosis in non-neuronal cells. Dephosphorylation at Ser-774, through the EGFR downstream signaling, leads to activation and regulates early stages of clathrin-mediated endocytosis (CME). Phosphorylated by CDK5 leading to synaptic vesicle endocytosis (SVE) activation.

The protein localises to the cell membrane. It is found in the membrane. Its subcellular location is the clathrin-coated pit. It localises to the cytoplasmic vesicle. The protein resides in the presynapse. The protein localises to the secretory vesicle. It is found in the chromaffin granule. The enzyme catalyses GTP + H2O = GDP + phosphate + H(+). Its activity is regulated as follows. GTPase activity is activated by 1-phosphatidyl-1D-myo-inositol 4,5-bisphosphate. GTPase activity is inhibited by the heterodimer G protein formed by GNB1 and GNG2 with an IC(50)=400 nM when DNM1 concentration is 5 nM. Its function is as follows. Catalyzes the hydrolysis of GTP and utilizes this energy to mediate vesicle scission and participates in many forms of endocytosis, such as clathrin-mediated endocytosis or synaptic vesicle endocytosis as well as rapid endocytosis (RE). Associates to the membrane, through lipid binding, and self-assembles into rings and stacks of interconnected rings through oligomerization to form a helical polymer around the vesicle membrane leading to constriction of invaginated coated pits around their necks. Self-assembly of the helical polymer induces membrane tubules narrowing until the polymer reaches a length sufficient to trigger GTP hydrolysis. Depending on the curvature imposed on the tubules, membrane detachment from the helical polymer upon GTP hydrolysis can cause spontaneous hemifission followed by complete fission. May play a role in regulating early stages of clathrin-mediated endocytosis in non-neuronal cells through its activation by dephosphorylation via the signaling downstream of EGFR. Controls vesicle size at a step before fission, during formation of membrane pits, at hippocampal synapses. Controls plastic adaptation of the synaptic vesicle recycling machinery to high levels of activity. Mediates rapid endocytosis (RE), a Ca(2+)-dependent and clathrin- and K(+)-independent process in chromaffin cells. Microtubule-associated force-producing protein involved in producing microtubule bundles and able to bind and hydrolyze GTP. Through its interaction with DNAJC6, acts during the early steps of clathrin-coated vesicle (CCV) formation. This Homo sapiens (Human) protein is Dynamin-1.